The sequence spans 493 residues: Glutamyl-tRNA(Gln) amidotransferase subunit A (493 aa).

Active-site charge relay system residues include K79 and S159. The active-site Acyl-ester intermediate is the S183.

The protein belongs to the amidase family. GatA subfamily. In terms of assembly, heterotrimer of A, B and C subunits.

The enzyme catalyses L-glutamyl-tRNA(Gln) + L-glutamine + ATP + H2O = L-glutaminyl-tRNA(Gln) + L-glutamate + ADP + phosphate + H(+). Allows the formation of correctly charged Gln-tRNA(Gln) through the transamidation of misacylated Glu-tRNA(Gln) in organisms which lack glutaminyl-tRNA synthetase. The reaction takes place in the presence of glutamine and ATP through an activated gamma-phospho-Glu-tRNA(Gln). This chain is Glutamyl-tRNA(Gln) amidotransferase subunit A, found in Rhizobium meliloti (strain 1021) (Ensifer meliloti).